Consider the following 339-residue polypeptide: Glycerol-3-phosphate dehydrogenase [NAD(P)+] (339 aa).

NADPH is bound by residues Ser-15, Tyr-16, His-36, and Lys-110. 3 residues coordinate sn-glycerol 3-phosphate: Lys-110, Gly-139, and Thr-141. Ala-143 provides a ligand contact to NADPH. Lys-195, Asp-248, Ser-258, Arg-259, and Asn-260 together coordinate sn-glycerol 3-phosphate. Lys-195 functions as the Proton acceptor in the catalytic mechanism. Arg-259 contributes to the NADPH binding site. NADPH-binding residues include Val-283 and Glu-285.

Belongs to the NAD-dependent glycerol-3-phosphate dehydrogenase family.

It is found in the cytoplasm. It catalyses the reaction sn-glycerol 3-phosphate + NAD(+) = dihydroxyacetone phosphate + NADH + H(+). The catalysed reaction is sn-glycerol 3-phosphate + NADP(+) = dihydroxyacetone phosphate + NADPH + H(+). It functions in the pathway membrane lipid metabolism; glycerophospholipid metabolism. Its function is as follows. Catalyzes the reduction of the glycolytic intermediate dihydroxyacetone phosphate (DHAP) to sn-glycerol 3-phosphate (G3P), the key precursor for phospholipid synthesis. This is Glycerol-3-phosphate dehydrogenase [NAD(P)+] from Shigella flexneri serotype 5b (strain 8401).